The primary structure comprises 613 residues: Threonine--tRNA ligase (613 aa).

An editing domain region spans residues 1–147 (MRLLLIHARS…TITPQESAPQ (147 aa)). Catalytic regions lie at residues 199–495 (PRYI…PALP) and 200–495 (RYID…PALP). Zn(2+) contacts are provided by cysteine 292, histidine 343, and histidine 464.

Belongs to the class-II aminoacyl-tRNA synthetase family. As to quaternary structure, homodimer. It depends on Zn(2+) as a cofactor.

The protein localises to the cytoplasm. It catalyses the reaction tRNA(Thr) + L-threonine + ATP = L-threonyl-tRNA(Thr) + AMP + diphosphate + H(+). Its function is as follows. Catalyzes the attachment of threonine to tRNA(Thr) in a two-step reaction: L-threonine is first activated by ATP to form Thr-AMP and then transferred to the acceptor end of tRNA(Thr). Also edits incorrectly charged L-seryl-tRNA(Thr). This chain is Threonine--tRNA ligase, found in Caldivirga maquilingensis (strain ATCC 700844 / DSM 13496 / JCM 10307 / IC-167).